The following is a 131-amino-acid chain: Small ribosomal subunit protein uS8 (131 aa).

This sequence belongs to the universal ribosomal protein uS8 family. As to quaternary structure, part of the 30S ribosomal subunit. Contacts proteins S5 and S12.

Its function is as follows. One of the primary rRNA binding proteins, it binds directly to 16S rRNA central domain where it helps coordinate assembly of the platform of the 30S subunit. This Phocaeicola vulgatus (strain ATCC 8482 / DSM 1447 / JCM 5826 / CCUG 4940 / NBRC 14291 / NCTC 11154) (Bacteroides vulgatus) protein is Small ribosomal subunit protein uS8.